A 519-amino-acid polypeptide reads, in one-letter code: Fatty acid--[acyl-carrier-protein] ligase ScoC (519 aa).

Residue Thr167 participates in Mg(2+) binding. The ATP site is built by Ile216 and Thr312. Glu313 is a binding site for Mg(2+). ATP-binding residues include Asp394 and Lys411.

The protein belongs to the ATP-dependent AMP-binding enzyme family. It depends on Mg(2+) as a cofactor.

The enzyme catalyses a medium-chain fatty acid + holo-[ACP] + ATP = a medium-chain fatty acyl-[ACP] + AMP + diphosphate. It catalyses the reaction a medium-chain fatty acid + ATP + H(+) = a medium-chain fatty acyl-AMP + diphosphate. The catalysed reaction is a medium-chain fatty acyl-AMP + holo-[ACP] = a medium-chain fatty acyl-[ACP] + AMP + H(+). It carries out the reaction octanoate + holo-[ACP] + ATP = octanoyl-[ACP] + AMP + diphosphate. The enzyme catalyses octanoate + ATP + H(+) = octanoyl-AMP + diphosphate. It catalyses the reaction octanoyl-AMP + holo-[ACP] = octanoyl-[ACP] + AMP + H(+). The catalysed reaction is a (2E)-enoyl fatty acid + holo-[ACP] + ATP = a (2E)-enoyl-[ACP] + AMP + diphosphate. It carries out the reaction a (2E)-enoyl fatty acid + ATP + H(+) = a (2E)-2-fatty-enoyl-AMP + diphosphate. The enzyme catalyses a (2E)-2-fatty-enoyl-AMP + holo-[ACP] = a (2E)-enoyl-[ACP] + AMP + H(+). It catalyses the reaction (2E)-2-butenoate + holo-[ACP] + ATP = (2E)-butenoyl-[ACP] + AMP + diphosphate. The catalysed reaction is (2E)-2-butenoate + ATP + H(+) = (2E)-but-2-enoyl-AMP + diphosphate. It carries out the reaction (2E)-but-2-enoyl-AMP + holo-[ACP] = (2E)-butenoyl-[ACP] + AMP + H(+). The enzyme catalyses a (3R)-3-isocyanyl-fatty acid + holo-[ACP] + ATP = a (3R)-3-isocyanyl-fatty acyl-[ACP] + AMP + diphosphate. It catalyses the reaction a (3R)-3-isocyanyl-fatty acid + ATP + H(+) = a (3R)-3-isocyanyl-fatty acyl-AMP + diphosphate. The catalysed reaction is a (3R)-3-isocyanyl-fatty acyl-AMP + holo-[ACP] = a (3R)-3-isocyanyl-fatty acyl-[ACP] + AMP + H(+). It carries out the reaction (3R)-3-isocyanylbutanoate + holo-[ACP] + ATP = (3R)-3-isocyanylbutanoyl-[ACP] + AMP + diphosphate. The enzyme catalyses (3R)-3-isocyanylbutanoate + ATP + H(+) = (3R)-3-isocyanylbutanoyl-AMP + diphosphate. It catalyses the reaction (3R)-3-isocyanylbutanoyl-AMP + holo-[ACP] = (3R)-3-isocyanylbutanoyl-[ACP] + AMP + H(+). Acyl:acyl-carrier protein ligase involved in the biosynthesis of a unique class of isonitrile lipopeptides (INLPs). Shows a strong preference for fatty acids with a short/medium-chain length (C4-C8) in vitro, and accepts alpha,beta-unsaturated fatty acids such as crotonate, which seems to be a physiological substrate. Acts twice during the INLP pathway, catalyzing the activation of crotonate ((2E)-2-butenoate) as well as (3R)-3-isocyanylbutanoate as acyl-adenylates (acyl-AMP), and then the acyl transfer to the dedicated acyl-carrier protein ScoB. The polypeptide is Fatty acid--[acyl-carrier-protein] ligase ScoC (Streptomyces coeruleorubidus).